Reading from the N-terminus, the 945-residue chain is Poly [ADP-ribose] polymerase 1 (945 aa).

The PARP-type 1 zinc-finger motif lies at 10–96; the sequence is YAIEYAKSGR…KLRQEIQHFK (87 aa). Positions 22, 25, 54, and 57 each coordinate Zn(2+). Residues 117-183 form a PARP-type 2; degenerate zinc finger; sequence IKTEKSLSNR…DYEENFKIKA (67 aa). The interval 195-251 is disordered; it reads RRSTEPATPASASPTPPEAETPVLSAEGSPESSNKRPASSEIIEIDGEGNPDENDFA. Over residues 237 to 248 the composition is skewed to acidic residues; that stretch reads IEIDGEGNPDEN. The 140-residue stretch at 258–397 folds into the PADR1 zinc-binding domain; it reads KEARLMEVQK…NQMSERLYIG (140 aa). Residues 324–369 are zinc ribbon; that stretch reads GCPIICQTCSNGKIVYNSSCRTYVCTGYATEYSKCTYESKNPIRTP. Zn(2+) is bound by residues cysteine 329, cysteine 332, cysteine 348, and cysteine 358. The WGR domain occupies 464-563; it reads RCHVFKNEID…KHFRKMPGMF (100 aa). A PARP alpha-helical domain is found at 586–704; that stretch reads KTLLPKSVKE…DIKFAYDQIS (119 aa). The PARP catalytic domain occupies 717–945; that stretch reads DPVDINYQKL…RVKMHHARHL (229 aa).

It belongs to the ARTD/PARP family.

It localises to the nucleus. It catalyses the reaction NAD(+) + (ADP-D-ribosyl)n-acceptor = nicotinamide + (ADP-D-ribosyl)n+1-acceptor + H(+).. The catalysed reaction is L-aspartyl-[protein] + NAD(+) = 4-O-(ADP-D-ribosyl)-L-aspartyl-[protein] + nicotinamide. It carries out the reaction L-glutamyl-[protein] + NAD(+) = 5-O-(ADP-D-ribosyl)-L-glutamyl-[protein] + nicotinamide. With respect to regulation, inhibited by N-(6-oxo-5,6-dihydrophenanthridin-2-yl)-N,N-dimethylacetamide HCl (PJ34), 1,5-dihydroxyisoquinoline (DHQ) and 3-aminobenzamide (3AB). Functionally, poly[ADP-ribose] polymerase modifies various nuclear proteins by poly(ADP-ribosyl)ation, a post-translational modification synthesized after DNA damage that appears as an obligatory step in a detection/signaling pathway leading to the reparation of DNA strand breaks and programmed cell death. Involved in protection of the genome against mutations. This chain is Poly [ADP-ribose] polymerase 1, found in Caenorhabditis elegans.